We begin with the raw amino-acid sequence, 326 residues long: Large ribosomal subunit protein uL4 (326 aa).

The large ribosomal subunit protein uL4 stretch occupies residues 1-211 (MASCVVKNWQ…EKLKARWGSG (211 aa)). Disordered regions lie at residues 44-76 (ARQGNAHTKTRAEVRGGGRKPWRQKGTGRARAG) and 211-326 (GAAA…EDND). Over residues 60-71 (GGRKPWRQKGTG) the composition is skewed to basic residues. The interval 212 to 326 (AAAAAPTQAD…TAAAEEEDND (115 aa)) is unknown. Residues 221–238 (DRLEDQAQAAEREARPVE) show a composition bias toward basic and acidic residues. 2 stretches are compositionally biased toward low complexity: residues 252–279 (EAQAQPEAPPAQADQANQVALANPQVQE) and 294–312 (QGQAELAQEAEPLAQPPAG). Acidic residues predominate over residues 313–326 (EEAETAAAEEEDND).

It belongs to the universal ribosomal protein uL4 family. In terms of assembly, part of the 50S ribosomal subunit.

Functionally, one of the primary rRNA binding proteins, this protein initially binds near the 5'-end of the 23S rRNA. It is important during the early stages of 50S assembly. It makes multiple contacts with different domains of the 23S rRNA in the assembled 50S subunit and ribosome. In terms of biological role, forms part of the polypeptide exit tunnel. The polypeptide is Large ribosomal subunit protein uL4 (Synechococcus sp. (strain JA-3-3Ab) (Cyanobacteria bacterium Yellowstone A-Prime)).